Reading from the N-terminus, the 868-residue chain is Leucine--tRNA ligase (868 aa).

The short motif at 42–52 (PYPSGKLHMGH) is the 'HIGH' region element. Residues 627–631 (KMSKS) carry the 'KMSKS' region motif. Lysine 630 lines the ATP pocket.

This sequence belongs to the class-I aminoacyl-tRNA synthetase family.

Its subcellular location is the cytoplasm. The enzyme catalyses tRNA(Leu) + L-leucine + ATP = L-leucyl-tRNA(Leu) + AMP + diphosphate. The protein is Leucine--tRNA ligase of Pseudomonas entomophila (strain L48).